The sequence spans 284 residues: Diaminopimelate epimerase (284 aa).

Residues N14 and N67 each contribute to the substrate site. The active-site Proton donor is C76. Substrate contacts are provided by residues 77–78, N166, N199, and 217–218; these read GN and ER. The active-site Proton acceptor is the C226. Residue 227–228 coordinates substrate; sequence GT.

This sequence belongs to the diaminopimelate epimerase family. In terms of assembly, homodimer.

The protein resides in the cytoplasm. The catalysed reaction is (2S,6S)-2,6-diaminopimelate = meso-2,6-diaminopimelate. Its pathway is amino-acid biosynthesis; L-lysine biosynthesis via DAP pathway; DL-2,6-diaminopimelate from LL-2,6-diaminopimelate: step 1/1. Functionally, catalyzes the stereoinversion of LL-2,6-diaminopimelate (L,L-DAP) to meso-diaminopimelate (meso-DAP), a precursor of L-lysine and an essential component of the bacterial peptidoglycan. The polypeptide is Diaminopimelate epimerase (Bacillus pumilus (strain SAFR-032)).